Here is a 535-residue protein sequence, read N- to C-terminus: CTP synthase (535 aa).

An amidoligase domain region spans residues 1–270 (MSKNTKYVFV…DRLVCEKLGL (270 aa)). Serine 16 is a binding site for CTP. Residue serine 16 participates in UTP binding. 17-22 (SLGKGI) lines the ATP pocket. Tyrosine 57 contacts L-glutamine. Aspartate 74 is an ATP binding site. Mg(2+)-binding residues include aspartate 74 and glutamate 144. Residues 151-153 (DIE), 191-196 (KTKPTQ), and lysine 227 contribute to the CTP site. Residues 191–196 (KTKPTQ) and lysine 227 contribute to the UTP site. Residues 295–535 (KIALVGKYVE…GFVGAALNNK (241 aa)) form the Glutamine amidotransferase type-1 domain. Glycine 357 serves as a coordination point for L-glutamine. Cysteine 384 acts as the Nucleophile; for glutamine hydrolysis in catalysis. Residues 385–388 (LGMQ), glutamate 408, and arginine 465 each bind L-glutamine. Catalysis depends on residues histidine 510 and glutamate 512.

The protein belongs to the CTP synthase family. Homotetramer.

The enzyme catalyses UTP + L-glutamine + ATP + H2O = CTP + L-glutamate + ADP + phosphate + 2 H(+). It catalyses the reaction L-glutamine + H2O = L-glutamate + NH4(+). It carries out the reaction UTP + NH4(+) + ATP = CTP + ADP + phosphate + 2 H(+). Its pathway is pyrimidine metabolism; CTP biosynthesis via de novo pathway; CTP from UDP: step 2/2. With respect to regulation, allosterically activated by GTP, when glutamine is the substrate; GTP has no effect on the reaction when ammonia is the substrate. The allosteric effector GTP functions by stabilizing the protein conformation that binds the tetrahedral intermediate(s) formed during glutamine hydrolysis. Inhibited by the product CTP, via allosteric rather than competitive inhibition. Functionally, catalyzes the ATP-dependent amination of UTP to CTP with either L-glutamine or ammonia as the source of nitrogen. Regulates intracellular CTP levels through interactions with the four ribonucleotide triphosphates. The polypeptide is CTP synthase (Clostridium perfringens (strain ATCC 13124 / DSM 756 / JCM 1290 / NCIMB 6125 / NCTC 8237 / Type A)).